A 131-amino-acid polypeptide reads, in one-letter code: Methylglyoxal synthase (131 aa).

The MGS-like domain occupies 1–131 (MKIALIAHDK…GDLDYRKLRK (131 aa)). Residues His8, Lys12, 34–37 (TGTT), and 54–55 (SG) contribute to the substrate site. Asp60 serves as the catalytic Proton donor/acceptor. Substrate is bound at residue His87.

This sequence belongs to the methylglyoxal synthase family.

It catalyses the reaction dihydroxyacetone phosphate = methylglyoxal + phosphate. In terms of biological role, catalyzes the formation of methylglyoxal from dihydroxyacetone phosphate. The polypeptide is Methylglyoxal synthase (Bacillus cereus (strain ATCC 10987 / NRS 248)).